A 92-amino-acid chain; its full sequence is Conotoxin Ac8.1 (92 aa).

A signal peptide spans 1-19 (LKMGAMFVLLLLFTLASSQ). A propeptide spanning residues 20–44 (QEGDVQARKTSLKSDFYRALRQYDR) is cleaved from the precursor. Position 45 is a pyrrolidone carboxylic acid (Gln-45).

Belongs to the conotoxin S superfamily. Contains 5 disulfide bonds. In terms of tissue distribution, expressed by the venom duct.

The protein resides in the secreted. The protein is Conotoxin Ac8.1 of Conus achatinus (Little frog cone).